A 551-amino-acid polypeptide reads, in one-letter code: Prunin 1 Pru du 6 (551 aa).

The signal sequence occupies residues 1–20 (MAKAFVFSLCLLLVFNGCLA). Cystine bridges form between C32–C65 and C108–C374. Residues 37 to 312 (LQAREPDNRI…ALNVNEETAR (276 aa)) form the Cupin type-1 1 domain. Disordered regions lie at residues 111–194 (TFEE…QKTR), 238–293 (NPRK…NVFS), and 329–360 (GNLDFVQPPRGRQEREHEERQQEQLQQERQQQ). 3 stretches are compositionally biased toward low complexity: residues 114–124 (ESQQSSQQGRQ), 132–148 (QQQQQGEQGRQQGQQEQ), and 168–185 (QEQQQGQQGRPQQQQQFR). R194 contacts Ca(2+). The segment covering 254-275 (QQGQSQPRQQGEQGRPGQHQQP) has biased composition (low complexity). Over residues 282 to 293 (QEQQGNGNNVFS) the composition is skewed to polar residues. Basic and acidic residues predominate over residues 339-350 (GRQEREHEERQQ). The segment covering 351–360 (EQLQQERQQQ) has biased composition (low complexity). Positions 367 to 372 (NGLEET) match the NGXEET; peptidase recognition motif motif. The 150-residue stretch at 380 to 529 (ENIGNPERAD…AYQISREQAR (150 aa)) folds into the Cupin type-1 2 domain.

This sequence belongs to the 11S seed storage protein (globulins) family. As to quaternary structure, hexamer of two trimers; each subunit is composed of an acidic and a basic chain derived from a single precursor and linked by a disulfide bond. Proteolytically processed from a single precursor to produce an acidic and a basic chain that are linked by a disulfide bond. As to expression, expressed in seed (at protein level). Expressed in seed.

Its function is as follows. Seed storage protein. The protein is Prunin 1 Pru du 6 of Prunus dulcis (Almond).